The chain runs to 368 residues: MHIYKVGGAVRDRLLGRPVSDIDWLVVGATVEEMLAKGYRPVGADFPVFLHPKTGEEYALARTERKSGRGYGGFTFHASPDVTLEEDLIRRDLTINAMAEDEAGTVYDPYQGKQDLDKRLLRHVSPAFAEDPLRVLRVARFAARYAPLGFRVADETLALMRQISASGELQALTAERSWKEIERALMEVQPQVFFKVLSACGALQELLPELDDSSRTLAALEQAAVHEQPLHVRWACLLRGLSPTSIKAVNQRLKAPRECQELAMLTGECLAQGNQALELPATALLELLQKFDVYRRPQRFEDFLVVCEMAARGDGEQGYPQADYLRRAAAAARAVDVKPLVQAGLTGQALGEALKGERLKALEAYQRG.

ATP-binding residues include Gly-8 and Arg-11. Positions 8 and 11 each coordinate CTP. Mg(2+)-binding residues include Asp-21 and Asp-23. ATP is bound by residues Arg-91, Arg-137, and Arg-140. Residues Arg-91, Arg-137, and Arg-140 each coordinate CTP.

This sequence belongs to the tRNA nucleotidyltransferase/poly(A) polymerase family. Bacterial CCA-adding enzyme type 2 subfamily. Requires Mg(2+) as cofactor.

It carries out the reaction a tRNA precursor + 2 CTP + ATP = a tRNA with a 3' CCA end + 3 diphosphate. The catalysed reaction is a tRNA with a 3' CCA end + 2 CTP + ATP = a tRNA with a 3' CCACCA end + 3 diphosphate. Catalyzes the addition and repair of the essential 3'-terminal CCA sequence in tRNAs without using a nucleic acid template. Adds these three nucleotides in the order of C, C, and A to the tRNA nucleotide-73, using CTP and ATP as substrates and producing inorganic pyrophosphate. tRNA 3'-terminal CCA addition is required both for tRNA processing and repair. Also involved in tRNA surveillance by mediating tandem CCA addition to generate a CCACCA at the 3' terminus of unstable tRNAs. While stable tRNAs receive only 3'-terminal CCA, unstable tRNAs are marked with CCACCA and rapidly degraded. The protein is CCA-adding enzyme of Pseudomonas putida (strain ATCC 700007 / DSM 6899 / JCM 31910 / BCRC 17059 / LMG 24140 / F1).